The chain runs to 238 residues: Orotidine 5'-phosphate decarboxylase (238 aa).

Substrate is bound by residues Asp10, Lys32, Asp59 to Thr68, Thr122, Arg184, Gln193, Gly213, and Arg214. Catalysis depends on Lys61, which acts as the Proton donor.

The protein belongs to the OMP decarboxylase family. Type 1 subfamily. As to quaternary structure, homodimer.

The enzyme catalyses orotidine 5'-phosphate + H(+) = UMP + CO2. It functions in the pathway pyrimidine metabolism; UMP biosynthesis via de novo pathway; UMP from orotate: step 2/2. Its function is as follows. Catalyzes the decarboxylation of orotidine 5'-monophosphate (OMP) to uridine 5'-monophosphate (UMP). The polypeptide is Orotidine 5'-phosphate decarboxylase (Bacillus cereus (strain ATCC 10987 / NRS 248)).